Reading from the N-terminus, the 158-residue chain is Crossover junction endodeoxyribonuclease RuvC (158 aa).

Active-site residues include Asp-7, Glu-66, and Asp-139. Mg(2+)-binding residues include Asp-7, Glu-66, and Asp-139.

The protein belongs to the RuvC family. As to quaternary structure, homodimer which binds Holliday junction (HJ) DNA. The HJ becomes 2-fold symmetrical on binding to RuvC with unstacked arms; it has a different conformation from HJ DNA in complex with RuvA. In the full resolvosome a probable DNA-RuvA(4)-RuvB(12)-RuvC(2) complex forms which resolves the HJ. The cofactor is Mg(2+).

It is found in the cytoplasm. The enzyme catalyses Endonucleolytic cleavage at a junction such as a reciprocal single-stranded crossover between two homologous DNA duplexes (Holliday junction).. Functionally, the RuvA-RuvB-RuvC complex processes Holliday junction (HJ) DNA during genetic recombination and DNA repair. Endonuclease that resolves HJ intermediates. Cleaves cruciform DNA by making single-stranded nicks across the HJ at symmetrical positions within the homologous arms, yielding a 5'-phosphate and a 3'-hydroxyl group; requires a central core of homology in the junction. The consensus cleavage sequence is 5'-(A/T)TT(C/G)-3'. Cleavage occurs on the 3'-side of the TT dinucleotide at the point of strand exchange. HJ branch migration catalyzed by RuvA-RuvB allows RuvC to scan DNA until it finds its consensus sequence, where it cleaves and resolves the cruciform DNA. The chain is Crossover junction endodeoxyribonuclease RuvC from Carboxydothermus hydrogenoformans (strain ATCC BAA-161 / DSM 6008 / Z-2901).